A 479-amino-acid polypeptide reads, in one-letter code: Aldehyde dehydrogenase family 3 member B3 (479 aa).

Residues glutamate 223 and cysteine 257 contribute to the active site. Cysteine 476 carries S-geranylgeranyl cysteine lipidation. A propeptide spans 477 to 479 (TLL) (removed in mature form).

This sequence belongs to the aldehyde dehydrogenase family. Geranylgeranylation is important for membrane localization and enzyme activity. Expressed in testis, kidney, small intestine, spleen, white adipose tissue, liver and lung.

It is found in the cell membrane. It catalyses the reaction an aldehyde + NAD(+) + H2O = a carboxylate + NADH + 2 H(+). The catalysed reaction is hexadecanoate + NADH + 2 H(+) = hexadecanal + NAD(+) + H2O. It carries out the reaction octanal + NAD(+) + H2O = octanoate + NADH + 2 H(+). Oxidizes medium and long chain aldehydes into non-toxic fatty acids. In Mus musculus (Mouse), this protein is Aldehyde dehydrogenase family 3 member B3.